The sequence spans 225 residues: GrpE protein homolog 2, mitochondrial (225 aa).

A mitochondrion-targeting transit peptide spans 1–32; sequence MAVRSLWACRLRVQRLLAWSAAWESKGWPLPF. At K142 the chain carries N6-acetyllysine.

It belongs to the GrpE family. Probable component of the PAM complex at least composed of a mitochondrial HSP70 protein, GRPEL1 or GRPEL2, TIMM44, TIMM16/PAM16 and TIMM14/DNAJC19.

It is found in the mitochondrion matrix. In terms of biological role, essential component of the PAM complex, a complex required for the translocation of transit peptide-containing proteins from the inner membrane into the mitochondrial matrix in an ATP-dependent manner. Seems to control the nucleotide-dependent binding of mitochondrial HSP70 to substrate proteins. Stimulates ATPase activity of mt-HSP70. May also serve to modulate the interconversion of oligomeric (inactive) and monomeric (active) forms of mt-HSP70. This chain is GrpE protein homolog 2, mitochondrial (GRPEL2), found in Pongo abelii (Sumatran orangutan).